The primary structure comprises 332 residues: 2,3-diketo-L-gulonate reductase (332 aa).

His-44 functions as the Proton donor in the catalytic mechanism. Residues Ile-168–Ser-174, Trp-224–Lys-225, and Gly-304–Glu-306 contribute to the NAD(+) site.

This sequence belongs to the LDH2/MDH2 oxidoreductase family. DlgD subfamily. Homodimer.

The protein resides in the cytoplasm. The catalysed reaction is 3-dehydro-L-gulonate + NAD(+) = 2,3-dioxo-L-gulonate + NADH + H(+). It carries out the reaction 3-dehydro-L-gulonate + NADP(+) = 2,3-dioxo-L-gulonate + NADPH + H(+). Catalyzes the reduction of 2,3-diketo-L-gulonate in the presence of NADH, to form 3-keto-L-gulonate. In Klebsiella oxytoca, this protein is 2,3-diketo-L-gulonate reductase.